A 129-amino-acid polypeptide reads, in one-letter code: Follitropin subunit beta (129 aa).

The N-terminal stretch at 1–20 is a signal peptide; it reads MKTLQFFFLFCCWKAICCNS. Intrachain disulfides connect cysteine 21–cysteine 69, cysteine 35–cysteine 84, cysteine 38–cysteine 122, cysteine 46–cysteine 100, cysteine 50–cysteine 102, and cysteine 105–cysteine 112. N-linked (GlcNAc...) asparagine glycans are attached at residues asparagine 25 and asparagine 42.

It belongs to the glycoprotein hormones subunit beta family. Heterodimer. The active follitropin is a heterodimer composed of an alpha chain/CGA shared with other hormones and a unique beta chain/FSHB shown here.

The protein localises to the secreted. Its function is as follows. Together with the alpha chain CGA constitutes follitropin, the follicle-stimulating hormone, and provides its biological specificity to the hormone heterodimer. Binds FSHR, a G protein-coupled receptor, on target cells to activate downstream signaling pathways. Follitropin is involved in follicle development and spermatogenesis in reproductive organs. The chain is Follitropin subunit beta (FSHB) from Gorilla gorilla gorilla (Western lowland gorilla).